Here is a 193-residue protein sequence, read N- to C-terminus: Achaete-scute homolog 2 (193 aa).

Disordered stretches follow at residues 1–27, 37–56, and 118–177; these read MDGGTLPRSAPPAPPVPVGCAARRRPA, RRRPATAETGGGAAAVARRN, and GGLR…GALS. The bHLH domain maps to 50-102; it reads AAVARRNERERNRVKLVNLGFQALRQHVPHGGASKKLSKVETLRSAVEYIRAL. Over residues 140 to 150 the composition is skewed to low complexity; sequence AASPSRASSSP.

As to quaternary structure, efficient DNA binding requires dimerization with another basic helix-loop-helix (bHLH) protein. Forms heterodimers with bHLH transcription factor TCF3. May not heterodimerise with bHLH protein HAND1. As to expression, expressed in the placenta at a stage between the first and second trimesters and when it matures, at about 32-36 weeks. Expressed in the extravillous trophoblasts, the intermediate trophoblasts, and at lower levels in the cytotrophoblasts and stroma of chorionic villi of the developing placenta. Expressed in follicular T-helper (Tfh) cells.

The protein resides in the nucleus. Transcription factor. Binds to E-box motifs 5'-CANNTG-3' in the regulatory elements of target genes, probably as a heterodimer with another basic helix-loop-helix (bHLH) protein such as the transcription factor TCF3. May bind both open and closed chromatin, acting as a pioneer transcription factor to allow other factors to bind and activate lineage-specific genes. Required during post-implantation development for the generation of some differentiated trophoblast cell types. Transcriptional activity of ASCL2 may be antagonised in a subset of trophoblast cells by bHLH transcription factor HAND1, perhaps by competing for dimerization with other bHLH proteins. Involved in differentiation and function of follicular T-helper (Tfh) cells, thereby playing a role in germinal center responses; probably modulates expression of genes involved in Tfh cell function, such as BCL6. May also act as a suppressor of Th1-, Th2- and Th17-cell differentiation. Induces the formation of stem cells in intestinal crypts in vitro, synergistically activating transcription of target genes, such as SOX9, together with TCF4/beta-catenin. May form a bistable transcriptional switch, controlling expression of its own gene together with Wnt/R-spondin signaling, and thereby maintaining stem cell characteristics. Modulates expression of target genes, including perhaps down-regulating EGR1/Krox24 and chemokine CXCL10/Mob-1 and up-regulating CXCR4 and CDKN1C/p57kip2, in Schwann cells. May play a role in reducing proliferation of Schwann cells, perhaps acting via modulation of expression of CDKN1C. May be dispensable for blastocyst formation and later embryonic function. May be involved in the determination of neuronal precursors. The protein is Achaete-scute homolog 2 (ASCL2) of Homo sapiens (Human).